Consider the following 705-residue polypeptide: GATOR2 complex protein WDR24 (705 aa).

WD repeat units follow at residues 1–28 (MDEN…RNKQ), 34–74 (EHKR…SVST), 77–117 (GQSE…RYER), 121–161 (AHNG…AKEI), 165–207 (QTIA…IPSA), and 211–254 (EHKD…IDRA). A C4-type zinc finger spans residues 633–655 (NCSNCKRPMSNRGWICDRCRQCA). Zn(2+) is bound by residues C634, C637, C648, C651, C658, C661, C672, C675, H677, H680, H683, C694, C698, H700, and C702. Residues 656 to 705 (SMCAVCHHVVKGLFVWCQGCSHGGHLQHIMKWLETSSHCPAGCGHLCEYT) form an RING-type; atypical zinc finger.

This sequence belongs to the WD repeat WDR24 family. As to quaternary structure, component of the GATOR2 subcomplex, composed of MIOS, SEC13, SEH1L, WDR24 and WDR59. The GATOR2 complex interacts with CASTOR1 and CASTOR2; the interaction is negatively regulated by arginine. The GATOR2 complex interacts with SESN1, SESN2 and SESN3; the interaction is negatively regulated by amino acids.

It localises to the lysosome membrane. The catalysed reaction is S-ubiquitinyl-[E2 ubiquitin-conjugating enzyme]-L-cysteine + [acceptor protein]-L-lysine = [E2 ubiquitin-conjugating enzyme]-L-cysteine + N(6)-ubiquitinyl-[acceptor protein]-L-lysine.. Its pathway is protein modification; protein ubiquitination. Its activity is regulated as follows. The GATOR2 complex is negatively regulated by the upstream amino acid sensors CASTOR1 and SESN2, which sequester the GATOR2 complex in absence of amino acids. In the presence of abundant amino acids, GATOR2 is released from CASTOR1 and SESN2 and activated. Catalytic component of the GATOR2 complex, a multiprotein complex that acts as an activator of the amino acid-sensing branch of the mTORC1 signaling pathway. The GATOR2 complex indirectly activates mTORC1 through the inhibition of the GATOR1 subcomplex. GATOR2 probably acts as an E3 ubiquitin-protein ligase toward GATOR1. In the presence of abundant amino acids, the GATOR2 complex mediates ubiquitination of the NPRL2 core component of the GATOR1 complex, leading to GATOR1 inactivation. In the absence of amino acids, GATOR2 is inhibited, activating the GATOR1 complex. In addition to its role in regulation of the mTORC1 complex, promotes the acidification of lysosomes and facilitates autophagic flux. Within the GATOR2 complex, WDR24 constitutes the catalytic subunit that mediates 'Lys-6'-linked ubiquitination of NPRL2. This is GATOR2 complex protein WDR24 from Gallus gallus (Chicken).